Here is a 460-residue protein sequence, read N- to C-terminus: A-type ATP synthase subunit B (460 aa).

This sequence belongs to the ATPase alpha/beta chains family. As to quaternary structure, has multiple subunits with at least A(3), B(3), C, D, E, F, H, I and proteolipid K(x).

The protein resides in the cell membrane. Component of the A-type ATP synthase that produces ATP from ADP in the presence of a proton gradient across the membrane. The B chain is a regulatory subunit. The polypeptide is A-type ATP synthase subunit B (Methanosarcina acetivorans (strain ATCC 35395 / DSM 2834 / JCM 12185 / C2A)).